A 95-amino-acid chain; its full sequence is Large ribosomal subunit protein uL23 (95 aa).

Belongs to the universal ribosomal protein uL23 family. As to quaternary structure, part of the 50S ribosomal subunit. Contacts protein L29 and trigger factor when it is bound to the ribosome.

In terms of biological role, one of the early assembly protein it binds 23S rRNA. One of the proteins that surrounds the polypeptide exit tunnel on the outside of the subunit. Forms the main docking site for trigger factor binding to the ribosome. The chain is Large ribosomal subunit protein uL23 from Deinococcus radiodurans (strain ATCC 13939 / DSM 20539 / JCM 16871 / CCUG 27074 / LMG 4051 / NBRC 15346 / NCIMB 9279 / VKM B-1422 / R1).